A 131-amino-acid chain; its full sequence is MKIMITISENSEAKELMPIAQAVHILVNKLPVAMRSKNKPGVRLEKGEVVDTNYEGYVLKVAIEKGEVVRATPIIGPYAGLPVIVAPIKDGDNVLGAIGVVDITAGIFEDIVAISRRPELYKFLPEDAFPK.

The next 2 helical transmembrane spans lie at 68-88 and 94-114; these read VVRA…VAPI and VLGA…IVAI.

It localises to the cell membrane. This is an uncharacterized protein from Methanocaldococcus jannaschii (strain ATCC 43067 / DSM 2661 / JAL-1 / JCM 10045 / NBRC 100440) (Methanococcus jannaschii).